Reading from the N-terminus, the 595-residue chain is Epsin-2 (595 aa).

A 1,2-diacyl-sn-glycero-3-phospho-(1D-myo-inositol-4,5-bisphosphate)-binding residues include Arg8, Lys11, Arg25, Asn30, Arg63, and His73. The ENTH domain occupies 12–144 (NIVNNYSEAE…KDEERLKVER (133 aa)). Residues 164 to 183 (NQITFGRGSSQPNLSTSYSE) show a composition bias toward polar residues. Disordered stretches follow at residues 164 to 254 (NQIT…RLRR), 267 to 289 (SRRDTVKVPKKKEAKACCKPGSH), 305 to 396 (SGPV…KPSS), and 423 to 469 (TSKK…PESF). Arg170 carries the post-translational modification Omega-N-methylarginine. 3 positions are modified to phosphoserine: Ser173, Ser192, and Ser195. Polar residues-rich tracts occupy residues 197-216 (HGSTSPRVSSELEQARPQTS) and 235-245 (EQSSESVQTAR). UIM domains are found at residues 218–237 (EEELQLQLALAMSREVAEQS) and 255–274 (GDDLRLQMALEESRRDTVKV). Polar residues predominate over residues 306–337 (GPVTQKTEPWSAGASANQTNPWGGTVAPSNIT). Repeat copies occupy residues 313 to 315 (EPW), 325 to 327 (NPW), 338 to 340 (DPW), and 352 to 354 (DPW). A 6 X 3 AA repeats of [DE]-P-W region spans residues 313-389 (EPWSAGASAN…SNAGKTTDAW (77 aa)). Residues 358 to 367 (TTASTQSVPK) are compositionally biased toward polar residues. The stretch at 370-372 (DPW) is repeat 5. The span at 374–384 (ASQQPASNAGK) shows a compositional bias: polar residues. Residues 387–389 (DAW) form repeat 6. Ser443 is modified (phosphoserine). A compositionally biased stretch (low complexity) spans 449-460 (SQSLTSASSKPS). Phosphothreonine is present on Thr465. 2 consecutive repeat copies span residues 494 to 496 (NPF) and 508 to 510 (NPF). Positions 494-593 (NPFLAPGAAA…AQSTGTTNPF (100 aa)) are 3 X 3 AA repeats of N-P-F. Phosphoserine is present on Ser526. Repeat 3 spans residues 591-593 (NPF).

Belongs to the epsin family. As to quaternary structure, binds EPS15, AP-2 and clathrin. Interacts with UBQLN2. Interacts with ITSN1. In terms of processing, ubiquitinated.

It is found in the cytoplasm. Its function is as follows. Plays a role in the formation of clathrin-coated invaginations and endocytosis. In Mus musculus (Mouse), this protein is Epsin-2 (Epn2).